The sequence spans 123 residues: MARILNIEIPNNKRVVISLTYIYGIGRTSAQEICAKAKIDENIRVKDLSEAQLSAIREIAKEYVTEGDLRREVSLNIKRLMEVKCYRGIRHRKGLPVRGQSTKSNARTRKGPRKTVAGKKSTK.

The tract at residues 94-123 (GLPVRGQSTKSNARTRKGPRKTVAGKKSTK) is disordered. The span at 106-123 (ARTRKGPRKTVAGKKSTK) shows a compositional bias: basic residues.

This sequence belongs to the universal ribosomal protein uS13 family. In terms of assembly, part of the 30S ribosomal subunit. Forms a loose heterodimer with protein S19. Forms two bridges to the 50S subunit in the 70S ribosome.

In terms of biological role, located at the top of the head of the 30S subunit, it contacts several helices of the 16S rRNA. In the 70S ribosome it contacts the 23S rRNA (bridge B1a) and protein L5 of the 50S subunit (bridge B1b), connecting the 2 subunits; these bridges are implicated in subunit movement. Contacts the tRNAs in the A and P-sites. In Mycoplasmopsis agalactiae (strain NCTC 10123 / CIP 59.7 / PG2) (Mycoplasma agalactiae), this protein is Small ribosomal subunit protein uS13.